The following is a 730-amino-acid chain: Ribosomal RNA large subunit methyltransferase K/L (730 aa).

Residues 46 to 157 form the THUMP domain; it reads TAYRLCLWSR…RGEAILSLDL (112 aa).

Belongs to the methyltransferase superfamily. RlmKL family.

The protein localises to the cytoplasm. It catalyses the reaction guanosine(2445) in 23S rRNA + S-adenosyl-L-methionine = N(2)-methylguanosine(2445) in 23S rRNA + S-adenosyl-L-homocysteine + H(+). The catalysed reaction is guanosine(2069) in 23S rRNA + S-adenosyl-L-methionine = N(2)-methylguanosine(2069) in 23S rRNA + S-adenosyl-L-homocysteine + H(+). Its function is as follows. Specifically methylates the guanine in position 2445 (m2G2445) and the guanine in position 2069 (m7G2069) of 23S rRNA. This chain is Ribosomal RNA large subunit methyltransferase K/L, found in Pseudomonas putida (strain W619).